The sequence spans 164 residues: UPF0114 protein YqhA (164 aa).

Helical transmembrane passes span Tyr10 to Leu32, Leu53 to Phe75, and Leu136 to Tyr155.

The protein belongs to the UPF0114 family.

Its subcellular location is the cell membrane. This is UPF0114 protein YqhA from Shigella flexneri.